A 29-amino-acid polypeptide reads, in one-letter code: Cyclotide mela-1 (29 aa).

The segment at residues 1-29 is a cross-link (cyclopeptide (Gly-Asp)); that stretch reads GKYTCGETCFKGKCYTPGCTCSYPICKKD. 3 cysteine pairs are disulfide-bonded: C5/C19, C9/C21, and C14/C26.

Post-translationally, this is a cyclic peptide. In terms of processing, contains 3 disulfide bonds.

Probably participates in a plant defense mechanism (Potential). Binds to and induces leakage in phospholipd membranes, particularly ones containing 1-palmitoyl-2-oleophosphatidylethanolamine (POPE). In vitro, displays cytotoxicity against cultured cells but no hemolytic activity towards fresh erythrocytes. Not active against Gram-negative bacterium E.coli ATCC 25922 or Gram-positive bacterium S.aureus ATCC 25923 up to a concentration of 64 uM. The sequence is that of Cyclotide mela-1 from Melicytus latifolius (Norfolk Island mahoe).